The following is a 309-amino-acid chain: Homoserine O-acetyltransferase (309 aa).

Cys142 serves as the catalytic Acyl-thioester intermediate. Substrate contacts are provided by Lys163 and Ser192. Catalysis depends on His235, which acts as the Proton acceptor. Residue Glu237 is part of the active site. Substrate is bound at residue Arg249.

This sequence belongs to the MetA family.

It localises to the cytoplasm. It carries out the reaction L-homoserine + acetyl-CoA = O-acetyl-L-homoserine + CoA. It functions in the pathway amino-acid biosynthesis; L-methionine biosynthesis via de novo pathway; O-acetyl-L-homoserine from L-homoserine: step 1/1. Functionally, transfers an acetyl group from acetyl-CoA to L-homoserine, forming acetyl-L-homoserine. This Allorhizobium ampelinum (strain ATCC BAA-846 / DSM 112012 / S4) (Agrobacterium vitis (strain S4)) protein is Homoserine O-acetyltransferase.